Reading from the N-terminus, the 70-residue chain is Cold shock-like protein CspG (70 aa).

In terms of domain architecture, CSD spans 7–67 (GLVKWFNEEK…GQKGLQAANV (61 aa)).

It is found in the cytoplasm. The protein is Cold shock-like protein CspG (cspG) of Shewanella violacea (strain JCM 10179 / CIP 106290 / LMG 19151 / DSS12).